A 152-amino-acid polypeptide reads, in one-letter code: UPF0266 membrane protein KPN78578_23010 (152 aa).

A run of 3 helical transmembrane segments spans residues L6–M26, V45–H65, and T67–I87.

The protein belongs to the UPF0266 family.

It localises to the cell inner membrane. This is UPF0266 membrane protein KPN78578_23010 from Klebsiella pneumoniae subsp. pneumoniae (strain ATCC 700721 / MGH 78578).